Consider the following 1134-residue polypeptide: Error-prone DNA polymerase (1134 aa).

The tract at residues 1-33 (MSYHNPPIPWRELEGRISGRPAPHGHQESHADQ) is disordered.

It belongs to the DNA polymerase type-C family. DnaE2 subfamily.

The protein localises to the cytoplasm. It catalyses the reaction DNA(n) + a 2'-deoxyribonucleoside 5'-triphosphate = DNA(n+1) + diphosphate. Functionally, DNA polymerase involved in damage-induced mutagenesis and translesion synthesis (TLS). It is not the major replicative DNA polymerase. The sequence is that of Error-prone DNA polymerase from Cutibacterium acnes (strain DSM 16379 / KPA171202) (Propionibacterium acnes).